The sequence spans 448 residues: Exodeoxyribonuclease 7 large subunit (448 aa).

Belongs to the XseA family. Heterooligomer composed of large and small subunits.

Its subcellular location is the cytoplasm. The catalysed reaction is Exonucleolytic cleavage in either 5'- to 3'- or 3'- to 5'-direction to yield nucleoside 5'-phosphates.. Its function is as follows. Bidirectionally degrades single-stranded DNA into large acid-insoluble oligonucleotides, which are then degraded further into small acid-soluble oligonucleotides. The protein is Exodeoxyribonuclease 7 large subunit of Hamiltonella defensa subsp. Acyrthosiphon pisum (strain 5AT).